The primary structure comprises 64 residues: Disintegrin VLO5A (64 aa).

The 64-residue stretch at 1–64 (NSGNPCCDPV…SDCPRNPYKD (64 aa)) folds into the Disintegrin domain. Intrachain disulfides connect C6–C29, C20–C26, C25–C50, and C38–C57. A Cell attachment site; atypical (VGD) motif is present at residues 42–44 (VGD).

It belongs to the venom metalloproteinase (M12B) family. P-II subfamily. P-IIe sub-subfamily. As to quaternary structure, heterodimer with VLO5B; disulfide-linked. In terms of tissue distribution, expressed by the venom gland.

Its subcellular location is the secreted. In terms of biological role, poor inhibitor of platelet aggregation. The disintegrin inhibits the adhesion of the alpha-4/beta-1 (ITGA4/ITGB1) integrin to VCAM-1. Inhibition on alpha-IIb/beta-3 (ITGA2B/ITGB3) is low. This Macrovipera lebetina obtusa (Levant blunt-nosed viper) protein is Disintegrin VLO5A.